The primary structure comprises 374 residues: Putative 12-oxophytodienoate reductase 5 (374 aa).

Residues 30–32 (PMT), alanine 63, and glutamine 105 each bind FMN. 177 to 180 (HGAN) provides a ligand contact to substrate. The active-site Proton donor is the tyrosine 182. Arginine 229 is a binding site for FMN. Arginine 270 contacts substrate. FMN is bound by residues glycine 300 and 321 to 322 (GR).

This sequence belongs to the NADH:flavin oxidoreductase/NADH oxidase family. FMN serves as cofactor.

Functionally, putative oxophytodienoate reductase that may be involved in the biosynthesis or metabolism of oxylipin signaling molecules. This Oryza sativa subsp. japonica (Rice) protein is Putative 12-oxophytodienoate reductase 5 (OPR5).